The chain runs to 276 residues: NH(3)-dependent NAD(+) synthetase (276 aa).

Residue 43–50 (GISGGVDS) coordinates ATP. Asp49 is a Mg(2+) binding site. Arg146 provides a ligand contact to deamido-NAD(+). Thr166 is an ATP binding site. A Mg(2+)-binding site is contributed by Glu171. Deamido-NAD(+) is bound by residues Lys179 and Asp186. Positions 195 and 217 each coordinate ATP. Position 266–267 (266–267 (HK)) interacts with deamido-NAD(+).

The protein belongs to the NAD synthetase family. As to quaternary structure, homodimer.

The enzyme catalyses deamido-NAD(+) + NH4(+) + ATP = AMP + diphosphate + NAD(+) + H(+). It participates in cofactor biosynthesis; NAD(+) biosynthesis; NAD(+) from deamido-NAD(+) (ammonia route): step 1/1. Catalyzes the ATP-dependent amidation of deamido-NAD to form NAD. Uses ammonia as a nitrogen source. This chain is NH(3)-dependent NAD(+) synthetase, found in Shewanella frigidimarina (strain NCIMB 400).